The chain runs to 230 residues: MYDIKKWRHIFKLDPAKHISDDDLDAICMSQTDAIMIGGTDDVTEDNVIHLMSKIRRYPLPLVLEISNIESVMPGFDFYFVPTVLNSTDVAFHNGTLLEALKTYGHSIDFEEVIFEGYVVCNADSKVAKHTKANTDLTTEDLEAYAQMVNHMYRLPVMYIEYSGIYGDVSKVQAVSEHLTETQLFYGGGISSEQQATEMAAIADTIIVGDIIYKDIKKALKTVKIKESSK.

Residue K12 participates in sn-glycerol 1-phosphate binding. 2 residues coordinate Mg(2+): D14 and T40. Residues 159-164 (YIEYSG), G189, and 209-210 (GD) each bind sn-glycerol 1-phosphate.

Belongs to the GGGP/HepGP synthase family. Group I subfamily. Homodimer. The cofactor is Mg(2+).

The catalysed reaction is sn-glycerol 1-phosphate + all-trans-heptaprenyl diphosphate = 3-heptaprenyl-sn-glycero-1-phosphate + diphosphate. The protein operates within membrane lipid metabolism; glycerophospholipid metabolism. Prenyltransferase that catalyzes in vivo the transfer of the heptaprenyl moiety of heptaprenyl pyrophosphate (HepPP; 35 carbon atoms) to the C3 hydroxyl of sn-glycerol-1-phosphate (G1P), producing heptaprenylglyceryl phosphate (HepGP). This reaction is an ether-bond-formation step in the biosynthesis of archaea-type G1P-based membrane lipids found in Bacillales. This chain is Heptaprenylglyceryl phosphate synthase, found in Staphylococcus aureus (strain Mu3 / ATCC 700698).